A 195-amino-acid chain; its full sequence is Molybdenum cofactor guanylyltransferase (195 aa).

Residues 10–12 (LAG), Lys23, Asn51, Asp69, and Asp99 contribute to the GTP site. Mg(2+) is bound at residue Asp99.

Belongs to the MobA family. In terms of assembly, monomer. Mg(2+) is required as a cofactor.

The protein resides in the cytoplasm. The enzyme catalyses Mo-molybdopterin + GTP + H(+) = Mo-molybdopterin guanine dinucleotide + diphosphate. In terms of biological role, transfers a GMP moiety from GTP to Mo-molybdopterin (Mo-MPT) cofactor (Moco or molybdenum cofactor) to form Mo-molybdopterin guanine dinucleotide (Mo-MGD) cofactor. In Shewanella putrefaciens (strain CN-32 / ATCC BAA-453), this protein is Molybdenum cofactor guanylyltransferase.